Here is a 163-residue protein sequence, read N- to C-terminus: Large ribosomal subunit protein uL10 (163 aa).

This sequence belongs to the universal ribosomal protein uL10 family. Part of the ribosomal stalk of the 50S ribosomal subunit. The N-terminus interacts with L11 and the large rRNA to form the base of the stalk. The C-terminus forms an elongated spine to which L12 dimers bind in a sequential fashion forming a multimeric L10(L12)X complex.

Its function is as follows. Forms part of the ribosomal stalk, playing a central role in the interaction of the ribosome with GTP-bound translation factors. This is Large ribosomal subunit protein uL10 from Haemophilus influenzae (strain PittGG).